Reading from the N-terminus, the 102-residue chain is Urease subunit beta (102 aa).

Belongs to the urease beta subunit family. In terms of assembly, heterotrimer of UreA (gamma), UreB (beta) and UreC (alpha) subunits. Three heterotrimers associate to form the active enzyme.

The protein localises to the cytoplasm. The catalysed reaction is urea + 2 H2O + H(+) = hydrogencarbonate + 2 NH4(+). The protein operates within nitrogen metabolism; urea degradation; CO(2) and NH(3) from urea (urease route): step 1/1. The protein is Urease subunit beta of Acinetobacter baylyi (strain ATCC 33305 / BD413 / ADP1).